Reading from the N-terminus, the 167-residue chain is MGQAKKVSSALSKLFVYGALKYGQPSNSILASSGNGFAKFWCKATTTQKLPLVIATRYNIPFLLNKPGVGYYVTGEIYEVDDRMLNSLDNLEDCEEIYTREMHDMNIGVGEGTVPCWVYLLQKYPENLLSLRYLSSYENSTTHPYIMRHRRTHKHPAQDDLTYEAQN.

17–20 provides a ligand contact to substrate; sequence YGAL. Catalysis depends on E92, which acts as the Proton acceptor.

It belongs to the gamma-glutamylcyclotransferase family. As to expression, in embryos, expression is seen in heart cells of the dorsal vessel and hindgut visceral mesoderm.

In terms of biological role, putative gamma-glutamylcyclotransferase. In Drosophila melanogaster (Fruit fly), this protein is Troponin C-akin-1 protein (Tina-1).